The sequence spans 484 residues: Ribosomal RNA small subunit methyltransferase F (484 aa).

S-adenosyl-L-methionine is bound by residues 126–132 (AAAPGSK), glutamate 150, aspartate 177, and aspartate 195. Cysteine 248 (nucleophile) is an active-site residue.

Belongs to the class I-like SAM-binding methyltransferase superfamily. RsmB/NOP family.

It localises to the cytoplasm. It catalyses the reaction cytidine(1407) in 16S rRNA + S-adenosyl-L-methionine = 5-methylcytidine(1407) in 16S rRNA + S-adenosyl-L-homocysteine + H(+). In terms of biological role, specifically methylates the cytosine at position 1407 (m5C1407) of 16S rRNA. The protein is Ribosomal RNA small subunit methyltransferase F of Pectobacterium atrosepticum (strain SCRI 1043 / ATCC BAA-672) (Erwinia carotovora subsp. atroseptica).